We begin with the raw amino-acid sequence, 236 residues long: Probable apoptosis inhibitor 2 (236 aa).

A BIR repeat occupies 85-150 (RKRSFASFKW…AHAADCAFRR (66 aa)). Cys-123, Cys-126, His-142, and Cys-146 together coordinate Zn(2+). The RING-type zinc finger occupies 189 to 223 (CKVCFVNEKSVCFLPCRHLVVCAECSPRCKRCCVC).

The chain is Probable apoptosis inhibitor 2 (IAP2) from Orgyia pseudotsugata multicapsid polyhedrosis virus (OpMNPV).